Consider the following 45-residue polypeptide: Photosystem II reaction center protein K (45 aa).

Positions 1–8 are excised as a propeptide; it reads MDFALLLA. The chain crosses the membrane as a helical span at residues 24–44; it reads LPLIPLFFLLLAFVWQAAVGF.

The protein belongs to the PsbK family. In terms of assembly, PSII is composed of 1 copy each of membrane proteins PsbA, PsbB, PsbC, PsbD, PsbE, PsbF, PsbH, PsbI, PsbJ, PsbK, PsbL, PsbM, PsbT, PsbX, PsbY, PsbZ, Psb30/Ycf12, peripheral proteins PsbO, CyanoQ (PsbQ), PsbU, PsbV and a large number of cofactors. It forms dimeric complexes.

The protein resides in the cellular thylakoid membrane. One of the components of the core complex of photosystem II (PSII). PSII is a light-driven water:plastoquinone oxidoreductase that uses light energy to abstract electrons from H(2)O, generating O(2) and a proton gradient subsequently used for ATP formation. It consists of a core antenna complex that captures photons, and an electron transfer chain that converts photonic excitation into a charge separation. In Gloeothece citriformis (strain PCC 7424) (Cyanothece sp. (strain PCC 7424)), this protein is Photosystem II reaction center protein K.